A 293-amino-acid chain; its full sequence is Energy-coupling factor transporter ATP-binding protein EcfA2 (293 aa).

The ABC transporter domain maps to I3–D246. ATP is bound at residue G40–S47.

The protein belongs to the ABC transporter superfamily. Energy-coupling factor EcfA family. As to quaternary structure, forms a stable energy-coupling factor (ECF) transporter complex composed of 2 membrane-embedded substrate-binding proteins (S component), 2 ATP-binding proteins (A component) and 2 transmembrane proteins (T component).

Its subcellular location is the cell membrane. ATP-binding (A) component of a common energy-coupling factor (ECF) ABC-transporter complex. Unlike classic ABC transporters this ECF transporter provides the energy necessary to transport a number of different substrates. This chain is Energy-coupling factor transporter ATP-binding protein EcfA2, found in Bacillus cereus (strain ATCC 10987 / NRS 248).